A 478-amino-acid chain; its full sequence is Ribosomal RNA small subunit methyltransferase F (478 aa).

Residues 125–131 (AAAPGSK), glutamate 149, aspartate 176, and aspartate 194 contribute to the S-adenosyl-L-methionine site. Cysteine 247 functions as the Nucleophile in the catalytic mechanism.

The protein belongs to the class I-like SAM-binding methyltransferase superfamily. RsmB/NOP family.

The protein localises to the cytoplasm. It catalyses the reaction cytidine(1407) in 16S rRNA + S-adenosyl-L-methionine = 5-methylcytidine(1407) in 16S rRNA + S-adenosyl-L-homocysteine + H(+). Specifically methylates the cytosine at position 1407 (m5C1407) of 16S rRNA. This chain is Ribosomal RNA small subunit methyltransferase F, found in Serratia proteamaculans (strain 568).